The chain runs to 129 residues: MARKVVRTKRRERKNIATGVAHIKSTFNNSMVTITDPKGNVISWSSAGALGFKGSRKSTPYAAQMAAETAAKAAMEHGLKEVECFVKGPGAGREAAIRALQAAGLEVNMIKDVTPIPHNGCRPPKRRRV.

This sequence belongs to the universal ribosomal protein uS11 family. As to quaternary structure, part of the 30S ribosomal subunit. Interacts with proteins S7 and S18. Binds to IF-3.

Functionally, located on the platform of the 30S subunit, it bridges several disparate RNA helices of the 16S rRNA. Forms part of the Shine-Dalgarno cleft in the 70S ribosome. This Desulfitobacterium hafniense (strain DSM 10664 / DCB-2) protein is Small ribosomal subunit protein uS11.